The following is a 388-amino-acid chain: S-adenosylmethionine synthase (388 aa).

H16 contacts ATP. Residue D18 coordinates Mg(2+). E44 is a K(+) binding site. Residues E57 and Q100 each contribute to the L-methionine site. The flexible loop stretch occupies residues 100-110; the sequence is QSPEIAQGVDR. Residues 165–167, D240, 246–247, A263, and K267 contribute to the ATP site; these read DAK and RK. D240 is an L-methionine binding site. K271 contributes to the L-methionine binding site.

The protein belongs to the AdoMet synthase family. In terms of assembly, homotetramer; dimer of dimers. Mg(2+) is required as a cofactor. Requires K(+) as cofactor.

It localises to the cytoplasm. It catalyses the reaction L-methionine + ATP + H2O = S-adenosyl-L-methionine + phosphate + diphosphate. Its pathway is amino-acid biosynthesis; S-adenosyl-L-methionine biosynthesis; S-adenosyl-L-methionine from L-methionine: step 1/1. Functionally, catalyzes the formation of S-adenosylmethionine (AdoMet) from methionine and ATP. The overall synthetic reaction is composed of two sequential steps, AdoMet formation and the subsequent tripolyphosphate hydrolysis which occurs prior to release of AdoMet from the enzyme. The chain is S-adenosylmethionine synthase from Acinetobacter baumannii (strain ACICU).